A 287-amino-acid chain; its full sequence is Bifunctional protein FolD (287 aa).

Residues 160–162 (GRS), serine 189, and isoleucine 230 each bind NADP(+).

The protein belongs to the tetrahydrofolate dehydrogenase/cyclohydrolase family. As to quaternary structure, homodimer.

The enzyme catalyses (6R)-5,10-methylene-5,6,7,8-tetrahydrofolate + NADP(+) = (6R)-5,10-methenyltetrahydrofolate + NADPH. The catalysed reaction is (6R)-5,10-methenyltetrahydrofolate + H2O = (6R)-10-formyltetrahydrofolate + H(+). It participates in one-carbon metabolism; tetrahydrofolate interconversion. Catalyzes the oxidation of 5,10-methylenetetrahydrofolate to 5,10-methenyltetrahydrofolate and then the hydrolysis of 5,10-methenyltetrahydrofolate to 10-formyltetrahydrofolate. In Chlamydia felis (strain Fe/C-56) (Chlamydophila felis), this protein is Bifunctional protein FolD.